The following is a 276-amino-acid chain: Aurora kinase C (276 aa).

The 251-residue stretch at 16-266 folds into the Protein kinase domain; sequence FEIGRPLGRG…LAQVLKHPWV (251 aa). Residues 22–30 and K45 contribute to the ATP site; that span reads LGRGKFGRV. D139 acts as the Proton acceptor in catalysis. At T171 the chain carries Phosphothreonine; by PKA.

It belongs to the protein kinase superfamily. Ser/Thr protein kinase family. Aurora subfamily. As to quaternary structure, component of the chromosomal passenger complex (CPC) composed of at least BIRC5/survivin, CDCA8/borealin, INCENP, AURKB or AURKC; predominantly independent AURKB- and AURKC-containing complexes exist; in the complex interacts directly with BIRC5/survivin and INCENP. Interacts with TACC1. In terms of tissue distribution, expressed only in testis.

Its subcellular location is the nucleus. The protein localises to the chromosome. It is found in the centromere. The protein resides in the cytoplasm. It localises to the cytoskeleton. Its subcellular location is the spindle. The enzyme catalyses L-seryl-[protein] + ATP = O-phospho-L-seryl-[protein] + ADP + H(+). The catalysed reaction is L-threonyl-[protein] + ATP = O-phospho-L-threonyl-[protein] + ADP + H(+). Its activity is regulated as follows. Okadaic acid, an inhibitor of protein phosphatase 1 (PP1), protein phosphatase 2A (PP2A) and protein phosphatase 5 (PP5), increases AURKC activity. AURKC is also stabilized through its interaction with INCENP, which also acts as an activator. Functionally, serine/threonine-protein kinase component of the chromosomal passenger complex (CPC), a complex that acts as a key regulator of mitosis. The CPC complex has essential functions at the centromere in ensuring correct chromosome alignment and segregation and is required for chromatin-induced microtubule stabilization and spindle assembly. Also plays a role in meiosis and more particularly in spermatogenesis. Has redundant cellular functions with AURKB and can rescue an AURKB knockdown. Like AURKB, AURKC phosphorylates histone H3 at 'Ser-10' and 'Ser-28'. AURKC phosphorylates the CPC complex subunits BIRC5/survivin and INCENP leading to increased AURKC activity. Phosphorylates TACC1, another protein involved in cell division, at 'Ser-228'. This is Aurora kinase C (Aurkc) from Mus musculus (Mouse).